The following is a 1487-amino-acid chain: Probable serine/threonine-protein kinase roco11 (1487 aa).

The interval 108-134 (TQPSSSHNHSNHHHHHHQQQLQQQQQQ) is disordered. Residues 116–125 (HSNHHHHHHQ) show a composition bias toward basic residues. 3 LRR repeats span residues 295–316 (NLAE…ICQL), 318–340 (HLKI…ANLT), and 341–362 (NLKY…IIEQ). The 186-residue stretch at 379 to 564 (KSETWNKVKL…KILTNEAEKS (186 aa)) folds into the Roc domain. A small GTPase-like region spans residues 379–564 (KSETWNKVKL…KILTNEAEKS (186 aa)). GTP contacts are provided by residues 392–399 (GQEGVGKS), 448–452 (DFGGQ), and 507–510 (THCD). In terms of domain architecture, COR spans 678–872 (VNQKYIDYND…KTYWANGILL (195 aa)). The interval 891 to 1007 (SILPNNSSST…NNNNNNNNNI (117 aa)) is disordered. Residues 897-931 (SSSTSSSTSSSTSSSTSSSSSSSTSSSSTSTTTTT) are compositionally biased toward low complexity. A compositionally biased stretch (polar residues) spans 932-950 (VQIQSSPFGNSTTIVNKLT). Low complexity predominate over residues 951-1007 (NIDNNNNNNNNNNNNNNNNNNINNNNNNNNNNNNNNNNNNNNNNNNNNNNNNNNNNI). The 268-residue stretch at 1185 to 1452 (VVCEEQIGVG…YIVKELTNFY (268 aa)) folds into the Protein kinase domain. ATP contacts are provided by residues 1191 to 1199 (IGVGGFGLV) and lysine 1216. The active-site Proton acceptor is aspartate 1313. The tract at residues 1464–1487 (KSINDKSPHPDLISNGVPKLQIAK) is disordered.

Belongs to the protein kinase superfamily. TKL Ser/Thr protein kinase family. ROCO subfamily.

The catalysed reaction is L-seryl-[protein] + ATP = O-phospho-L-seryl-[protein] + ADP + H(+). It catalyses the reaction L-threonyl-[protein] + ATP = O-phospho-L-threonyl-[protein] + ADP + H(+). This is Probable serine/threonine-protein kinase roco11 (roco11) from Dictyostelium discoideum (Social amoeba).